Here is a 282-residue protein sequence, read N- to C-terminus: Hepatitis A virus cellular receptor 2 homolog (282 aa).

The N-terminal stretch at 1-21 (MFSWLPFSCALLLLQPLPARS) is a signal peptide. The Ig-like V-type domain occupies 22–131 (LENAYTAEVG…EKLELKLSIT (110 aa)). The Extracellular portion of the chain corresponds to 22–194 (LENAYTAEVG…KDSGETIRTA (173 aa)). 3 disulfide bridges follow: Cys-38-Cys-111, Cys-52-Cys-63, and Cys-58-Cys-110. Residue Gln-62 participates in a 1,2-diacyl-sn-glycero-3-phospho-L-serine binding. 2 N-linked (GlcNAc...) asparagine glycosylation sites follow: Asn-74 and Asn-100. Arg-112 is a binding site for a 1,2-diacyl-sn-glycero-3-phospho-L-serine. Positions 115 and 117 each coordinate Ca(2+). Met-119 is an a 1,2-diacyl-sn-glycero-3-phospho-L-serine binding site. Asn-120 contacts Ca(2+). Residues 138–163 (PAGTAHGDSTTASPRTLTTEGSGSET) form a disordered region. A compositionally biased stretch (polar residues) spans 144–163 (GDSTTASPRTLTTEGSGSET). Thr-147 carries O-linked (GalNAc...) threonine glycosylation. A glycan (N-linked (GlcNAc...) asparagine) is linked at Asn-173. The chain crosses the membrane as a helical span at residues 195 to 215 (VHIGVGVSAGLALALILGVLI). At 216–282 (LKWYSSKKKK…YCYVSSQQPS (67 aa)) the chain is on the cytoplasmic side. Residues 253–271 (EENIYTIEENIYEMENSNE) form an interaction with BAG6 region. Tyr-257 is modified (phosphotyrosine; by ITK).

The protein belongs to the immunoglobulin superfamily. TIM family. Interacts with HMGB1; impairs HMGB1 binding to B-DNA and likely HMGB1-mediated innate immune response. Interacts with BAG6. Interacts (phosphorylated) with PIK3R1 and PIK3R2. Interacts (not dependent on its phosphorylation status) with FYN. Interacts (in basal state T-cells) with VAV1; AKT1/2, LCP2, ZAP70, SYK, PIK3R1, FYN, SH3BP2 and SH2D2A. Interacts (in activated T-cells) with LCK and PLCG. Interacts with ILF3; this interaction promotes ILF3 ubiquitination and degradation.

The protein localises to the membrane. It is found in the cell junction. Functionally, cell surface receptor implicated in modulating innate and adaptive immune responses. Generally accepted to have an inhibiting function. Reports on stimulating functions suggest that the activity may be influenced by the cellular context and/or the respective ligand. Regulates macrophage activation. Inhibits T-helper type 1 lymphocyte (Th1)-mediated auto- and alloimmune responses and promotes immunological tolerance. In CD8+ cells attenuates TCR-induced signaling, specifically by blocking NF-kappaB and NFAT promoter activities resulting in the loss of IL-2 secretion. The function may implicate its association with LCK proposed to impair phosphorylation of TCR subunits. In contrast, shown to activate TCR-induced signaling in T-cells probably implicating ZAP70, LCP2, LCK and FYN. Expressed on Treg cells can inhibit Th17 cell responses. Receptor for LGALS9. Binding to LGALS9 is believed to result in suppression of T-cell responses; the resulting apoptosis of antigen-specific cells may implicate HAVCR2 phosphorylation and disruption of its association with BAG6. Binding to LGALS9 is proposed to be involved in innate immune response to intracellular pathogens. Expressed on Th1 cells interacts with LGALS9 expressed on Mycobacterium tuberculosis-infected macrophages to stimulate antibactericidal activity including IL-1 beta secretion and to restrict intracellular bacterial growth. However, the function as receptor for LGALS9 has been challenged. Also reported to enhance CD8+ T cell responses to an acute infection such as by Listeria monocytogenes. Receptor for phosphatidylserine (PtSer); PtSer-binding is calcium-dependent. May recognize PtSer on apoptotic cells leading to their phagocytosis. Mediates the engulfment of apoptotic cells by dendritic cells. Expressed on T-cells, promotes conjugation but not engulfment of apoptotic cells. Expressed on dendritic cells (DCs) positively regulates innate immune response and in synergy with Toll-like receptors promotes secretion of TNF-alpha. In tumor-imfiltrating DCs suppresses nucleic acid-mediated innate immune repsonse by interaction with HMGB1 and interfering with nucleic acid-sensing and trafficking of nucleid acids to endosomes. Can enhance mast cell production of Th2 cytokines Il-4, IL-6 and IL-13. Expressed on natural killer (NK) cells acts as a coreceptor to enhance IFN-gamma production in response to LGALS9. In contrast, shown to suppress NK cell-mediated cytotoxicity. Negatively regulates NK cell function in LPS-induced endotoxic shock. This Rattus norvegicus (Rat) protein is Hepatitis A virus cellular receptor 2 homolog (Havcr2).